Consider the following 261-residue polypeptide: Triosephosphate isomerase (261 aa).

Residues asparagine 11 and lysine 13 each contribute to the D-glyceraldehyde 3-phosphate site. Histidine 102 functions as the Electrophile in the catalytic mechanism. Glutamate 174 serves as the catalytic Proton acceptor. Residues glycine 180, leucine 239, and glycine 241 each contribute to the D-glyceraldehyde 3-phosphate site.

Belongs to the triosephosphate isomerase family. In terms of assembly, homodimer.

It carries out the reaction D-glyceraldehyde 3-phosphate = dihydroxyacetone phosphate. It participates in carbohydrate biosynthesis; gluconeogenesis. The protein operates within carbohydrate degradation; glycolysis; D-glyceraldehyde 3-phosphate from glycerone phosphate: step 1/1. Its function is as follows. Catalyzes the interconversion of glyceraldehyde 3-phosphate and dihydroxyacetone phosphate in the glycolytic and gluconeogenic pathways. In Entamoeba histolytica (strain ATCC 30459 / HM-1:IMSS / ABRM), this protein is Triosephosphate isomerase.